A 339-amino-acid chain; its full sequence is Tetraacyldisaccharide 4'-kinase (339 aa).

62–69 (VAGGTGKT) is a binding site for ATP.

Belongs to the LpxK family.

The enzyme catalyses a lipid A disaccharide + ATP = a lipid IVA + ADP + H(+). It participates in glycolipid biosynthesis; lipid IV(A) biosynthesis; lipid IV(A) from (3R)-3-hydroxytetradecanoyl-[acyl-carrier-protein] and UDP-N-acetyl-alpha-D-glucosamine: step 6/6. Transfers the gamma-phosphate of ATP to the 4'-position of a tetraacyldisaccharide 1-phosphate intermediate (termed DS-1-P) to form tetraacyldisaccharide 1,4'-bis-phosphate (lipid IVA). The protein is Tetraacyldisaccharide 4'-kinase of Xylella fastidiosa (strain M12).